A 341-amino-acid polypeptide reads, in one-letter code: L-amino acid-D/L-Glu epimerase (341 aa).

Residues Thr132 and 157 to 159 contribute to the substrate site; that span reads KIK. Mg(2+) is bound by residues Asp186, Glu212, and Asp237. Residues Lys261 and 315-317 each bind substrate; that span reads DLD.

The protein belongs to the mandelate racemase/muconate lactonizing enzyme family. The cofactor is Mg(2+).

Catalyzes the epimerization of dipeptides with L-Glu in the second position. Has epimerase activity with L-Gly-L-Glu, L-Ala-L-Glu, L-Ser-L-Glu, L-Pro-L-Glu, L-Val-L-Glu, L-Met-L-Glu, L-Thr-L-Glu and L-Phe-L-Glu (in vitro). The polypeptide is L-amino acid-D/L-Glu epimerase (Sulfurimonas denitrificans (strain ATCC 33889 / DSM 1251) (Thiomicrospira denitrificans (strain ATCC 33889 / DSM 1251))).